The primary structure comprises 383 residues: Acetylornithine deacetylase (383 aa).

Residue histidine 80 participates in Zn(2+) binding. Aspartate 82 is an active-site residue. Aspartate 112 is a binding site for Zn(2+). Glutamate 144 is an active-site residue. Zn(2+) is bound by residues glutamate 145, glutamate 169, and histidine 355.

It belongs to the peptidase M20A family. ArgE subfamily. In terms of assembly, homodimer. The cofactor is Zn(2+). Requires Co(2+) as cofactor. Glutathione is required as a cofactor.

The protein localises to the cytoplasm. It carries out the reaction N(2)-acetyl-L-ornithine + H2O = L-ornithine + acetate. The protein operates within amino-acid biosynthesis; L-arginine biosynthesis; L-ornithine from N(2)-acetyl-L-ornithine (linear): step 1/1. Functionally, catalyzes the hydrolysis of the amide bond of N(2)-acetylated L-amino acids. Cleaves the acetyl group from N-acetyl-L-ornithine to form L-ornithine, an intermediate in L-arginine biosynthesis pathway, and a branchpoint in the synthesis of polyamines. This Shigella flexneri protein is Acetylornithine deacetylase.